Here is a 425-residue protein sequence, read N- to C-terminus: Gamma-glutamyl phosphate reductase (425 aa).

The protein belongs to the gamma-glutamyl phosphate reductase family.

It is found in the cytoplasm. It carries out the reaction L-glutamate 5-semialdehyde + phosphate + NADP(+) = L-glutamyl 5-phosphate + NADPH + H(+). The protein operates within amino-acid biosynthesis; L-proline biosynthesis; L-glutamate 5-semialdehyde from L-glutamate: step 2/2. Its function is as follows. Catalyzes the NADPH-dependent reduction of L-glutamate 5-phosphate into L-glutamate 5-semialdehyde and phosphate. The product spontaneously undergoes cyclization to form 1-pyrroline-5-carboxylate. The polypeptide is Gamma-glutamyl phosphate reductase (Symbiobacterium thermophilum (strain DSM 24528 / JCM 14929 / IAM 14863 / T)).